A 179-amino-acid chain; its full sequence is MFHGTTILSVRRQTPQGVQVAIGGDGQVTLGAIVVKGTARKVRKLHHGKVLAGFAGATADAFTLFERFEAKLDKHQGHLVRSAIELTKDWRTDRVLRRLEAMLAVADQESSLIITGNGDVLEPEQGIIAIGSGGAYANAAAKALLNHTDLSAADIVKQALEIAGELCIYTNMHHTIETL.

Thr-5 is an active-site residue. Residues Gly-164, Cys-167, and Thr-170 each coordinate Na(+).

This sequence belongs to the peptidase T1B family. HslV subfamily. A double ring-shaped homohexamer of HslV is capped on each side by a ring-shaped HslU homohexamer. The assembly of the HslU/HslV complex is dependent on binding of ATP.

It localises to the cytoplasm. It catalyses the reaction ATP-dependent cleavage of peptide bonds with broad specificity.. With respect to regulation, allosterically activated by HslU binding. Its function is as follows. Protease subunit of a proteasome-like degradation complex believed to be a general protein degrading machinery. The polypeptide is ATP-dependent protease subunit HslV (Verminephrobacter eiseniae (strain EF01-2)).